The sequence spans 130 residues: uncharacterized protein (130 aa).

Polar residues-rich tracts occupy residues 1–27 (MEIL…QPSQ) and 36–46 (QAENQETAKNG). 2 disordered regions span residues 1-46 (MEIL…AKNG) and 103-130 (VSAQ…ELDL). Positions 27–51 (QDAHEKARQQAENQETAKNGMISQI) form a coiled coil.

Belongs to the PDCD5 family.

This is an uncharacterized protein from Caenorhabditis elegans.